A 157-amino-acid polypeptide reads, in one-letter code: Transcription elongation factor GreA (157 aa).

The stretch at 13 to 75 (RARLEAELEE…EIKSILARAQ (63 aa)) forms a coiled coil.

Belongs to the GreA/GreB family.

Functionally, necessary for efficient RNA polymerase transcription elongation past template-encoded arresting sites. The arresting sites in DNA have the property of trapping a certain fraction of elongating RNA polymerases that pass through, resulting in locked ternary complexes. Cleavage of the nascent transcript by cleavage factors such as GreA or GreB allows the resumption of elongation from the new 3'terminus. GreA releases sequences of 2 to 3 nucleotides. In Roseiflexus castenholzii (strain DSM 13941 / HLO8), this protein is Transcription elongation factor GreA.